Reading from the N-terminus, the 450-residue chain is FAD-linked oxidoreductase penO (450 aa).

Residues Pro-32–Ala-203 form the FAD-binding PCMH-type domain.

Belongs to the oxygen-dependent FAD-linked oxidoreductase family. Requires FAD as cofactor.

It functions in the pathway secondary metabolite biosynthesis. Its function is as follows. FAD-linked oxidoreductase; part of the gene cluster that mediates the biosynthesis of the indole diterpenes penitrems. The geranylgeranyl diphosphate (GGPP) synthase penG catalyzes the first step in penitrem biosynthesis via conversion of farnesyl pyrophosphate and isopentyl pyrophosphate into geranylgeranyl pyrophosphate (GGPP). Condensation of indole-3-glycerol phosphate with GGPP by the prenyl transferase penC then forms 3-geranylgeranylindole (3-GGI). Epoxidation by the FAD-dependent monooxygenase penM leads to a epoxidized-GGI that is substrate of the terpene cyclase penB for cyclization to yield paspaline. Paspaline is subsequently converted to 13-desoxypaxilline by the cytochrome P450 monooxygenase penP, the latter being then converted to paxilline by the cytochrome P450 monooxygenase penQ. Paxilline is converted to beta-paxitriol via C-10 ketoreduction by the short-chain dehydrogenase PC-15 which can be monoprenylated at the C-20 by the indole diterpene prenyltransferase penD. A two-step elimination (acetylation and elimination) process performed by the O-acetyltransferase PC-16 and the P.simplicissimum ptmI-ortholog not yet identified in P.crustosum, leads to the production of the prenylated form of penijanthine. The FAD-linked oxidoreductase ptmO then converts the prenylated form of penijanthine into PC-M5 which is in turn transformed into PC-M4 by the aromatic dimethylallyltransferase PC-22. A series of oxidation steps involving 4 cytochrome P450 monooxygenases (PC-21, PC-05, PC-23, PC-20) and a FAD-dependent monooxygenase (PC-14) are required for the transformation of PC-M4 to penitrems A and E. Synthesis of these final products is proposed to proceed via penitrems D and C (PC-21, PC-05, PC-14) and penitrems B and F (PC-21, PC-05, PC-14, PC-23). In Penicillium crustosum (Blue mold fungus), this protein is FAD-linked oxidoreductase penO.